Consider the following 385-residue polypeptide: Cytochrome b (385 aa).

The Mitochondrial matrix portion of the chain corresponds to 1 to 27 (MRLLKSHPLLKLVNSYLIDASQPSNIS). Residue Tyr16 coordinates a ubiquinone. Residues 28-51 (YLWNFGSLLACCLIIQIVTGVTLA) traverse the membrane as a helical segment. The Mitochondrial intermembrane portion of the chain corresponds to 52–74 (MHYSPNVLEAFNSIEHIMRDVNN). The chain crosses the membrane as a helical span at residues 75 to 102 (GWLVRYLHSNTASAFFFLVYLHIGRGMY). Heme b contacts are provided by His82 and His96. Residues 103–110 (YGSYRAPR) lie on the Mitochondrial matrix side of the membrane. Residues 111 to 135 (TLVWAIGTVILILMMATAFLGYVLP) form a helical membrane-spanning segment. Over 136–172 (YGQMSLWGATVITNLISAIPWIGQDIVEFIWGGFSVN) the chain is Mitochondrial intermembrane. Residues 173–205 (NATLNRFFALHFVLPFILAALVLMHLIALHDTA) form a helical membrane-spanning segment. 2 residues coordinate heme b: His183 and His197. His202 is an a ubiquinone binding site. Residues 206–224 (GSSNPLGVSGNYDRITFAP) are Mitochondrial matrix-facing. A helical transmembrane segment spans residues 225–247 (YYLFKDLITIFIFIYVLSSFVFF). The Mitochondrial intermembrane portion of the chain corresponds to 248–288 (MPNVLGDSENYIMANPMQTPPAIVPEWYLLPFYAILRSIPN). Residues 289 to 309 (KLLGVIAMFSAILAIMLLPIT) form a helical membrane-spanning segment. The Mitochondrial matrix segment spans residues 310-320 (DLGRSKGLQFR). The helical transmembrane segment at 321 to 341 (PLSKFAFWAFVVNFLILMKLG) threads the bilayer. At 342–348 (ACHVESP) the chain is on the mitochondrial intermembrane side. The chain crosses the membrane as a helical span at residues 349–365 (FIELGQFSTIFYFSYFI). The Mitochondrial matrix portion of the chain corresponds to 366-385 (FIVPVLSLIENTLVDLNYLK).

This sequence belongs to the cytochrome b family. As to quaternary structure, component of the ubiquinol-cytochrome c oxidoreductase (cytochrome b-c1 complex, complex III, CIII), a multisubunit enzyme composed of 10 subunits. The complex is composed of 3 respiratory subunits cytochrome b (cob), cytochrome c1 (cyt-1) and Rieske protein (fes-1), 2 core protein subunits pep and ucr-1, and 5 low-molecular weight protein subunits qcr6, qcr7, qcr8, qcr9 and probably NCU16844/qcr10. The complex exists as an obligatory dimer and forms supercomplexes (SCs) in the inner mitochondrial membrane with NADH-ubiquinone oxidoreductase (complex I, CI) and cytochrome c oxidase (complex IV, CIV), resulting in different assemblies (supercomplexes SCI(1)III(2), SCIII(2)IV(1) and SCIII(2)IV(2) as well as higher order I(x)III(y)IV(z) megacomplexes). The cofactor is heme b.

Its subcellular location is the mitochondrion inner membrane. It carries out the reaction a quinol + 2 Fe(III)-[cytochrome c](out) = a quinone + 2 Fe(II)-[cytochrome c](out) + 2 H(+)(out). In terms of biological role, component of the ubiquinol-cytochrome c oxidoreductase, a multisubunit transmembrane complex that is part of the mitochondrial electron transport chain which drives oxidative phosphorylation. The respiratory chain contains 3 multisubunit complexes succinate dehydrogenase (complex II, CII), ubiquinol-cytochrome c oxidoreductase (cytochrome b-c1 complex, complex III, CIII) and cytochrome c oxidase (complex IV, CIV), that cooperate to transfer electrons derived from NADH and succinate to molecular oxygen, creating an electrochemical gradient over the inner membrane that drives transmembrane transport and the ATP synthase. The cytochrome b-c1 complex catalyzes electron transfer from ubiquinol to cytochrome c, linking this redox reaction to translocation of protons across the mitochondrial inner membrane, with protons being carried across the membrane as hydrogens on the quinol. In the process called Q cycle, 2 protons are consumed from the matrix, 4 protons are released into the intermembrane space and 2 electrons are passed to cytochrome c. Cytochrome b is a catalytic core subunit containing 2 b-type hemes BL and BH topographically segregated in the quinone reduction (Qi) and quinol oxidation (Q0) sites on opposite sides of the membrane. This Neurospora crassa (strain ATCC 24698 / 74-OR23-1A / CBS 708.71 / DSM 1257 / FGSC 987) protein is Cytochrome b (cob).